Here is a 522-residue protein sequence, read N- to C-terminus: Glutamyl-tRNA(Gln) amidotransferase subunit A (522 aa).

Active-site charge relay system residues include K88 and S163. The active-site Acyl-ester intermediate is S187.

The protein belongs to the amidase family. GatA subfamily. As to quaternary structure, heterotrimer of A, B and C subunits.

The enzyme catalyses L-glutamyl-tRNA(Gln) + L-glutamine + ATP + H2O = L-glutaminyl-tRNA(Gln) + L-glutamate + ADP + phosphate + H(+). In terms of biological role, allows the formation of correctly charged Gln-tRNA(Gln) through the transamidation of misacylated Glu-tRNA(Gln) in organisms which lack glutaminyl-tRNA synthetase. The reaction takes place in the presence of glutamine and ATP through an activated gamma-phospho-Glu-tRNA(Gln). The protein is Glutamyl-tRNA(Gln) amidotransferase subunit A of Paenarthrobacter aurescens (strain TC1).